A 419-amino-acid chain; its full sequence is Menaquinone reductase, integral membrane subunit (419 aa).

The next 10 helical transmembrane spans lie at 23-43 (LSKFMMWMAFVFVFFGWGLYA), 61-81 (FGFGLWITFDLAVIALGAGAF), 98-118 (IINLAVIIGFLCYSGAMLVLV), 143-163 (VIFCITCYCLVLIIEYVPLIL), 176-196 (AVAHNFHVMMPLFAGIGAFLS), 221-241 (FFIWPWTFFLYVLSAVGSGPV), 270-290 (IAGTMLMVYLIFKFADTYAWA), 316-336 (LWAELFYCGLVPAIILIVPAL), 341-361 (VLFYSAAILDCIGITINRYVM), and 383-403 (WAEWGASVMIVAYAALVLSLS).

The protein belongs to the NrfD family. The Qrc complex is composed of four subunits: QrcA, QrcB, QrcC and QrcD. Can form a supercomplex with the [NiFe] hydrogenase HynA1 and the tetraheme Type I cytochrome c3 TpIc(3), its physiological electron donors.

The protein resides in the cell inner membrane. In terms of biological role, component of the respiratory Qrc complex, that catalyzes the reduction of the menaquinone pool using electrons transferred from the reduced periplasmic cytochrome c3, and which is probably involved in sulfate respiration. Is likely essential for growth on H(2) or formate since the periplasmic hydrogenases and/or formate dehydrogenases act as primary electron donors for the Qrc complex. The QrcD subunit anchors the protein complex to the membrane and likely interacts with the quinone pool. The polypeptide is Menaquinone reductase, integral membrane subunit (Nitratidesulfovibrio vulgaris (strain ATCC 29579 / DSM 644 / CCUG 34227 / NCIMB 8303 / VKM B-1760 / Hildenborough) (Desulfovibrio vulgaris)).